Consider the following 557-residue polypeptide: Warthog protein 4 (557 aa).

The signal sequence occupies residues 1–20 (MRFSLLALVLLSSSYKFTYG). The interval 272–308 (QETNPQPPPPPGQQGGFVQPQGFQPQGGFQPQGFQPQ) is disordered. Residues 287-308 (GFVQPQGFQPQGGFQPQGFQPQ) are compositionally biased toward low complexity.

Belongs to the hedgehog family. In terms of processing, the C-terminal domain displays an autoproteolysis activity.

It is found in the secreted. It localises to the cell surface. The protein resides in the cell membrane. Its subcellular location is the extracellular space. In terms of biological role, intercellular signal essential for a variety of patterning events during development. In Caenorhabditis elegans, this protein is Warthog protein 4 (wrt-4).